The sequence spans 377 residues: Queuine tRNA-ribosyltransferase (377 aa).

Aspartate 94 (proton acceptor) is an active-site residue. Substrate-binding positions include aspartate 94 to phenylalanine 98, aspartate 148, glutamine 191, and glycine 218. The RNA binding stretch occupies residues glycine 249 to aspartate 255. The active-site Nucleophile is the aspartate 268. Residues threonine 273–arginine 277 form an RNA binding; important for wobble base 34 recognition region.

Belongs to the queuine tRNA-ribosyltransferase family. Homodimer. Within each dimer, one monomer is responsible for RNA recognition and catalysis, while the other monomer binds to the replacement base PreQ1.

It carries out the reaction 7-aminomethyl-7-carbaguanine + guanosine(34) in tRNA = 7-aminomethyl-7-carbaguanosine(34) in tRNA + guanine. It functions in the pathway tRNA modification; tRNA-queuosine biosynthesis. In terms of biological role, catalyzes the base-exchange of a guanine (G) residue with the queuine precursor 7-aminomethyl-7-deazaguanine (PreQ1) at position 34 (anticodon wobble position) in tRNAs with GU(N) anticodons (tRNA-Asp, -Asn, -His and -Tyr). Catalysis occurs through a double-displacement mechanism. The nucleophile active site attacks the C1' of nucleotide 34 to detach the guanine base from the RNA, forming a covalent enzyme-RNA intermediate. The proton acceptor active site deprotonates the incoming PreQ1, allowing a nucleophilic attack on the C1' of the ribose to form the product. After dissociation, two additional enzymatic reactions on the tRNA convert PreQ1 to queuine (Q), resulting in the hypermodified nucleoside queuosine (7-(((4,5-cis-dihydroxy-2-cyclopenten-1-yl)amino)methyl)-7-deazaguanosine). This is Queuine tRNA-ribosyltransferase from Brucella suis biovar 1 (strain 1330).